The primary structure comprises 413 residues: Cell division protein FtsZ 2 (413 aa).

Residues 132–134 (GTG), Glu171, Arg175, and Asp218 each bind GTP.

Belongs to the FtsZ family. As to quaternary structure, homodimer. Polymerizes to form a dynamic ring structure in a strictly GTP-dependent manner. Interacts directly with several other division proteins.

The protein localises to the cytoplasm. In terms of biological role, essential cell division protein that forms a contractile ring structure (Z ring) at the future cell division site. The regulation of the ring assembly controls the timing and the location of cell division. One of the functions of the FtsZ ring is to recruit other cell division proteins to the septum to produce a new cell wall between the dividing cells. Binds GTP and shows GTPase activity. This Thermococcus kodakarensis (strain ATCC BAA-918 / JCM 12380 / KOD1) (Pyrococcus kodakaraensis (strain KOD1)) protein is Cell division protein FtsZ 2.